We begin with the raw amino-acid sequence, 328 residues long: Serine/threonine protein kinase RdoA (328 aa).

Asp-201 serves as the catalytic Proton acceptor. Mg(2+) contacts are provided by Asn-206 and Asp-217. Residue Asp-217 is part of the active site.

This sequence belongs to the SrkA/RdoA protein kinase family. As to quaternary structure, monomer. The cofactor is Mg(2+).

The protein resides in the cytoplasm. The enzyme catalyses L-seryl-[protein] + ATP = O-phospho-L-seryl-[protein] + ADP + H(+). The catalysed reaction is L-threonyl-[protein] + ATP = O-phospho-L-threonyl-[protein] + ADP + H(+). Its function is as follows. A protein kinase that (auto)phosphorylates on Ser and Thr residues, probably involved in the extracytoplasmic stress response. Probably acts to suppress the effects of stress linked to accumulation of reactive oxygen species. The sequence is that of Serine/threonine protein kinase RdoA from Salmonella typhimurium (strain LT2 / SGSC1412 / ATCC 700720).